Reading from the N-terminus, the 412-residue chain is Interferon-inducible GTPase 5 (412 aa).

Residues threonine 51–aspartate 234 enclose the IRG-type G domain. Residues glutamate 60–serine 67, threonine 85–glutamate 89, and serine 215–leucine 217 contribute to the GTP site. Serine 246 and serine 303 each carry phosphoserine.

This sequence belongs to the TRAFAC class dynamin-like GTPase superfamily. IRG family. As to quaternary structure, interacts with PLIN2/ADRP and COX4I1/COXIV. Expressed in spermatozoa tails from the testis and epididymis, where it may be a component of the fibrous sheath (at protein level).

It is found in the cell projection. Its subcellular location is the cilium. The protein localises to the flagellum. The protein resides in the lipid droplet. The enzyme catalyses GTP + H2O = GDP + phosphate + H(+). In terms of biological role, required for sperm motility and therefore male fertility, via positive regulation of spermatozoa fibrous sheath formation. This is Interferon-inducible GTPase 5 from Mus musculus (Mouse).